A 150-amino-acid polypeptide reads, in one-letter code: Putative antitoxin VapB45 (150 aa).

Positions 124–150 (AQRPVAAGRPRPRPQRPVSDRVSDQRR) are disordered. The span at 141–150 (VSDRVSDQRR) shows a compositional bias: basic and acidic residues.

Belongs to the phD/YefM antitoxin family.

Functionally, possibly the antitoxin component of a type II toxin-antitoxin (TA) system. Its cognate toxin is VapC45 (Potential). In Mycobacterium tuberculosis (strain CDC 1551 / Oshkosh), this protein is Putative antitoxin VapB45 (vapB45).